The chain runs to 188 residues: MKANDIKKGNVVEYNGGIYQIRDIERSSPQGRGGNVRFRFIMYSVPGGVKTDASLDADDNLPDVELLRRLSTFSYKDGEAFVFMDDEDFTPYTLDADVIGTDAGYITDGLTGIYVQVIDDQPVAVQLPQTVTLEVVETPPELKGGTATKRPKPAKLNTGMEIMVPEYITNGERVLVNTTTGEFAGRAD.

It belongs to the elongation factor P family.

The chain is Elongation factor P-like protein from Xanthomonas oryzae pv. oryzae (strain MAFF 311018).